The chain runs to 88 residues: Apolipoprotein C-I (88 aa).

Positions 1–26 are cleaved as a signal peptide; the sequence is MRLFISLPVLIVVLAMALEGPAPAQA.

This sequence belongs to the apolipoprotein C1 family.

It is found in the secreted. Functionally, inhibitor of lipoprotein binding to the low density lipoprotein (LDL) receptor, LDL receptor-related protein, and very low density lipoprotein (VLDL) receptor. Associates with high density lipoproteins (HDL) and the triacylglycerol-rich lipoproteins in the plasma and makes up about 10% of the protein of the VLDL and 2% of that of HDL. Appears to interfere directly with fatty acid uptake and is also the major plasma inhibitor of cholesteryl ester transfer protein (CETP). Modulates the interaction of APOE with beta-migrating VLDL and inhibits binding of beta-VLDL to the LDL receptor-related protein. Binds free fatty acids and reduces their intracellular esterification. The polypeptide is Apolipoprotein C-I (APOC1) (Myodes glareolus (Bank vole)).